The following is a 175-amino-acid chain: Cytochrome c-550-like protein (175 aa).

An N-terminal signal peptide occupies residues 1 to 34 (MYQPHFWQRSIGWLCGGLLILLLGWTIAPATALA). 4 residues coordinate heme c: cysteine 81, cysteine 84, histidine 85, and cysteine 135.

It belongs to the cytochrome c family. PsbV subfamily. Heme c is required as a cofactor.

Its subcellular location is the cellular thylakoid membrane. In terms of biological role, probable low-potential cytochrome c, can partially replace cytochrome c-550 (PsbV) function. In Thermosynechococcus vestitus (strain NIES-2133 / IAM M-273 / BP-1), this protein is Cytochrome c-550-like protein.